A 155-amino-acid polypeptide reads, in one-letter code: Small ribosomal subunit protein uS7 (155 aa).

The protein belongs to the universal ribosomal protein uS7 family. Part of the 30S ribosomal subunit. Contacts proteins S9 and S11.

One of the primary rRNA binding proteins, it binds directly to 16S rRNA where it nucleates assembly of the head domain of the 30S subunit. Is located at the subunit interface close to the decoding center, probably blocks exit of the E-site tRNA. The polypeptide is Small ribosomal subunit protein uS7 (Sulfurovum sp. (strain NBC37-1)).